The sequence spans 674 residues: F420-dependent formate dehydrogenase 1 subunit alpha (674 aa).

A 4Fe-4S Mo/W bis-MGD-type domain is found at 3-59 (LDFIHTICPYCGTGCGVDLVVKDGTLVGTNPFKRHPVNEGKTCIKGSYCHEFVHRDD). Residues C10, C13, C17, and C45 each coordinate [4Fe-4S] cluster. U132 is a non-standard amino acid (selenocysteine).

It belongs to the prokaryotic molybdopterin-containing oxidoreductase family. As to quaternary structure, dimer of an alpha (FdhA1) and a beta (FdhB1) subunit. [4Fe-4S] cluster serves as cofactor. The cofactor is Mo-bis(molybdopterin guanine dinucleotide). Zn(2+) is required as a cofactor.

It catalyses the reaction oxidized coenzyme F420-(gamma-L-Glu)(n) + formate + 2 H(+) = reduced coenzyme F420-(gamma-L-Glu)(n) + CO2. Catalyzes the oxidation of formate to carbon dioxide, with coenzyme F420 as the electron acceptor. In vitro can also use methyl viologen as electron acceptor. This is F420-dependent formate dehydrogenase 1 subunit alpha from Methanococcus maripaludis (strain DSM 14266 / JCM 13030 / NBRC 101832 / S2 / LL).